Here is an 818-residue protein sequence, read N- to C-terminus: Fibrous sheath CABYR-binding protein (818 aa).

The segment at 1 to 61 (MEEKDESEQS…PKAALSIGNI (61 aa)) is disordered. Phosphoserine occurs at positions 25, 57, and 182. Disordered regions lie at residues 195 to 727 (SFSK…PFIT) and 773 to 805 (LESG…NEGV). Composition is skewed to low complexity over residues 490-511 (SPPA…PAEE), 544-560 (EAPA…PAEE), and 697-715 (AELQ…VSVE). Basic and acidic residues predominate over residues 773 to 794 (LESGNLDDKPKSEEPLERDTIP).

Interacts with CABYR. Interacts with ROPN1 and ROPN1L; the interaction increases upon spermatozoa capacitation conditions. Post-translationally, phosphorylated by PKA upon spermatozoa capacitation conditions.

It is found in the cell projection. Its subcellular location is the cilium. The protein localises to the flagellum. May be involved in the later stages of fibrous sheath biogenesis and spermatozoa capacitation. Inhibits ROPN1 and ROPN1L SUMOylation. Binds calcium. The polypeptide is Fibrous sheath CABYR-binding protein (Bos taurus (Bovine)).